A 159-amino-acid polypeptide reads, in one-letter code: S-ribosylhomocysteine lyase 1 (159 aa).

Fe cation is bound by residues His-54, His-58, and Cys-124.

It belongs to the LuxS family. Homodimer. Fe cation serves as cofactor.

It carries out the reaction S-(5-deoxy-D-ribos-5-yl)-L-homocysteine = (S)-4,5-dihydroxypentane-2,3-dione + L-homocysteine. Its function is as follows. Involved in the synthesis of autoinducer 2 (AI-2) which is secreted by bacteria and is used to communicate both the cell density and the metabolic potential of the environment. The regulation of gene expression in response to changes in cell density is called quorum sensing. Catalyzes the transformation of S-ribosylhomocysteine (RHC) to homocysteine (HC) and 4,5-dihydroxy-2,3-pentadione (DPD). The chain is S-ribosylhomocysteine lyase 1 from Lactobacillus delbrueckii subsp. bulgaricus (strain ATCC BAA-365 / Lb-18).